Consider the following 356-residue polypeptide: GDP-mannose:di-myo-inositol-1,3'-phosphate beta-1,2-mannosyltransferase (356 aa).

It belongs to the MDIP synthase family. Mg(2+) is required as a cofactor.

The enzyme catalyses bis(myo-inositol) 1,3'-phosphate + GDP-alpha-D-mannose = 2-O-(beta-D-mannosyl)-bis(myo-inositol) 1,3'-phosphate + GDP + H(+). It carries out the reaction 2-O-(beta-D-mannosyl)-bis(myo-inositol) 1,3'-phosphate + GDP-alpha-D-mannose = 2-O-(beta-D-mannosyl-(1-&gt;2)-beta-D-mannosyl)-bis(myo-inositol) 1,3'-phosphate + GDP + H(+). It catalyses the reaction bis(myo-inositol) 1,3'-phosphate + 2 GDP-alpha-D-mannose = 2-O-(beta-D-mannosyl-(1-&gt;2)-beta-D-mannosyl)-bis(myo-inositol) 1,3'-phosphate + 2 GDP + 2 H(+). Its function is as follows. Catalyzes the transfer of the mannosyl group from GDP-mannose to di-myo-inositol-1,3'-phosphate (DIP), producing mannosyl-di-myo-inositol phosphate (MDIP). Can also use MDIP as an acceptor of a second mannose residue, yielding di-mannosyl-di-myo-inositol phosphate (MMDIP). In Aquifex aeolicus (strain VF5), this protein is GDP-mannose:di-myo-inositol-1,3'-phosphate beta-1,2-mannosyltransferase.